The following is a 749-amino-acid chain: cGMP-dependent protein kinase egl-4 (749 aa).

Residues 30-96 are a coiled coil; it reads EAHELQKLIP…LEQKAQSAAS (67 aa). The disordered stretch occupies residues 87–111; that stretch reads LEQKAQSAASPGQPPSPSPRTDQLG. 3',5'-cyclic GMP-binding positions include 234–237, 244–245, arginine 349, 358–361, 368–369, and tyrosine 403; these read GELA, RT, and GERA. Positions 438–698 constitute a Protein kinase domain; the sequence is VKRLATLGVG…VNDIRKHRWF (261 aa). ATP contacts are provided by residues 444-452 and lysine 468; that span reads LGVGGFGRV. Positions 461–473 match the Nuclear localization signal motif; it reads KSKTYALKALKKK. Aspartate 562 serves as the catalytic Proton acceptor. In terms of domain architecture, AGC-kinase C-terminal spans 699 to 749; that stretch reads MGFDWEGLRTKTLKPPILPKVNNPADVTNFDNYPPDNDVPPDEFSGWDEGF. Residues 723 to 749 are disordered; that stretch reads ADVTNFDNYPPDNDVPPDEFSGWDEGF.

The protein belongs to the protein kinase superfamily. AGC Ser/Thr protein kinase family. cGMP subfamily. Requires Mg(2+) as cofactor. Autophosphorylated.

Its subcellular location is the cytoplasm. The protein resides in the nucleus. The enzyme catalyses L-seryl-[protein] + ATP = O-phospho-L-seryl-[protein] + ADP + H(+). It catalyses the reaction L-threonyl-[protein] + ATP = O-phospho-L-threonyl-[protein] + ADP + H(+). Binding of cGMP results in enzyme activation. In terms of biological role, promotes chemoreceptor gene expression in response to increased cGMP levels by antagonizing the gene repression functions of the class II HDAC hda-4 and the mef-2 transcription factor. Regulates gene expression via recruitment of a histone deacetylase complex containing hda-2, saeg-1 and saeg-2. Represses body size and lifespan through the dbl-1 and insulin pathways, respectively. May also signal through daf-3 and/or daf-5. Role in egg-laying, dauer formation and motility. Regulates behavioral responses to various chemosensory stimuli in sensory neurons. Required for the initiation of long term adaptation to prolonged odor exposure which results in a decrease in odor seeking behavior. May regulate this process by phosphorylating tax-2, a subunit of cyclic nucleotide-gated channel tax-2/tax-4. In ASH sensory neurons, negatively regulates avoidance behavior to some bitter tastants, such as quinine, probably by phosphorylating rgs-2 and rgs-3 which are 2 regulator of G-protein signaling proteins. In AWB sensory neurons, involved in avoidance behavior to some repellent odors. In ASE left (ASEL) sensory neuron, involved in the sensing of environmental alkalinity downstream of receptor-type guanylate cyclase gcy-14. In sensory neurons, involved in the signaling pathway downstream of insulin, TGF-beta and receptor-type guanylate cyclase responsible for inducing quiescence after food intake. Might play a role in aversive olfactory learning in AWC neurons when an odor is associated with food deprivation, depending on the ins-1/age-1 signal from the AIA to the AWC neurons. Probably by regulating neuronal transmission downstream of lin-3 and receptor lin-23 and phospholipase plc-3 in ALA neurons, involved in the decrease in locomotion during the quiescent state that precedes each larval molt. This is cGMP-dependent protein kinase egl-4 from Caenorhabditis briggsae.